We begin with the raw amino-acid sequence, 154 residues long: Transcription antitermination protein NusB (154 aa).

The protein belongs to the NusB family.

Involved in transcription antitermination. Required for transcription of ribosomal RNA (rRNA) genes. Binds specifically to the boxA antiterminator sequence of the ribosomal RNA (rrn) operons. The protein is Transcription antitermination protein NusB of Enterococcus faecalis (strain ATCC 700802 / V583).